The sequence spans 211 residues: Stromal cell-derived factor 2 (211 aa).

Positions 1-18 (MAVLSLLLLGGLWSAVGA) are cleaved as a signal peptide. 3 MIR domains span residues 21 to 75 (MAVV…IRGK), 83 to 138 (GTPI…VLCN), and 139 to 193 (GPYW…AMEG).

As to expression, ubiquitously expressed with highest expression in liver and kidney.

The protein resides in the secreted. The sequence is that of Stromal cell-derived factor 2 (Sdf2) from Mus musculus (Mouse).